Reading from the N-terminus, the 487-residue chain is Cytochrome P450 2C4 (487 aa).

Cysteine 432 contributes to the heme binding site.

Belongs to the cytochrome P450 family. It depends on heme as a cofactor.

The protein localises to the endoplasmic reticulum membrane. The protein resides in the microsome membrane. It catalyses the reaction an organic molecule + reduced [NADPH--hemoprotein reductase] + O2 = an alcohol + oxidized [NADPH--hemoprotein reductase] + H2O + H(+). Functionally, cytochromes P450 are a group of heme-thiolate monooxygenases. In liver microsomes, this enzyme is involved in an NADPH-dependent electron transport pathway. It oxidizes a variety of structurally unrelated compounds, including steroids, fatty acids, and xenobiotics. This is Cytochrome P450 2C4 (CYP2C4) from Oryctolagus cuniculus (Rabbit).